Consider the following 673-residue polypeptide: DNA ligase (673 aa).

NAD(+) is bound by residues 36–40, 85–86, and Glu-118; these read DSEYD and SL. Lys-120 serves as the catalytic N6-AMP-lysine intermediate. Arg-141, Glu-178, Lys-295, and Lys-319 together coordinate NAD(+). Zn(2+) contacts are provided by Cys-413, Cys-416, Cys-431, and Cys-437. Positions 596-673 constitute a BRCT domain; that stretch reads VRDNPLKGKT…SENEFLALLA (78 aa).

The protein belongs to the NAD-dependent DNA ligase family. LigA subfamily. Requires Mg(2+) as cofactor. Mn(2+) serves as cofactor.

The catalysed reaction is NAD(+) + (deoxyribonucleotide)n-3'-hydroxyl + 5'-phospho-(deoxyribonucleotide)m = (deoxyribonucleotide)n+m + AMP + beta-nicotinamide D-nucleotide.. DNA ligase that catalyzes the formation of phosphodiester linkages between 5'-phosphoryl and 3'-hydroxyl groups in double-stranded DNA using NAD as a coenzyme and as the energy source for the reaction. It is essential for DNA replication and repair of damaged DNA. The sequence is that of DNA ligase from Histophilus somni (strain 129Pt) (Haemophilus somnus).